A 197-amino-acid polypeptide reads, in one-letter code: FMN-dependent NADH:quinone oxidoreductase (197 aa).

FMN-binding positions include Ser-10, 16-18 (SQS), 93-96 (MYNF), and 137-140 (TRGG).

Belongs to the azoreductase type 1 family. As to quaternary structure, homodimer. FMN is required as a cofactor.

The enzyme catalyses 2 a quinone + NADH + H(+) = 2 a 1,4-benzosemiquinone + NAD(+). The catalysed reaction is N,N-dimethyl-1,4-phenylenediamine + anthranilate + 2 NAD(+) = 2-(4-dimethylaminophenyl)diazenylbenzoate + 2 NADH + 2 H(+). In terms of biological role, quinone reductase that provides resistance to thiol-specific stress caused by electrophilic quinones. Also exhibits azoreductase activity. Catalyzes the reductive cleavage of the azo bond in aromatic azo compounds to the corresponding amines. This Shewanella frigidimarina (strain NCIMB 400) protein is FMN-dependent NADH:quinone oxidoreductase.